Here is a 265-residue protein sequence, read N- to C-terminus: Hydroxyethylthiazole kinase (265 aa).

M43 is a substrate binding site. R119 and S165 together coordinate ATP. Residue A192 participates in substrate binding.

Belongs to the Thz kinase family. It depends on Mg(2+) as a cofactor.

The enzyme catalyses 5-(2-hydroxyethyl)-4-methylthiazole + ATP = 4-methyl-5-(2-phosphooxyethyl)-thiazole + ADP + H(+). It participates in cofactor biosynthesis; thiamine diphosphate biosynthesis; 4-methyl-5-(2-phosphoethyl)-thiazole from 5-(2-hydroxyethyl)-4-methylthiazole: step 1/1. In terms of biological role, catalyzes the phosphorylation of the hydroxyl group of 4-methyl-5-beta-hydroxyethylthiazole (THZ). The protein is Hydroxyethylthiazole kinase of Haemophilus influenzae (strain 86-028NP).